Reading from the N-terminus, the 515-residue chain is Cytochrome P450 1A2 (515 aa).

Residue S69 is glycosylated (O-linked (GlcNAc) serine). Position 226 (F226) interacts with substrate. A heme-binding site is contributed by C458.

The protein belongs to the cytochrome P450 family. In terms of assembly, interacts with PGRMC1; the interaction requires PGRMC1 homodimerization. It depends on heme as a cofactor.

Its subcellular location is the endoplasmic reticulum membrane. The protein resides in the microsome membrane. The catalysed reaction is an organic molecule + reduced [NADPH--hemoprotein reductase] + O2 = an alcohol + oxidized [NADPH--hemoprotein reductase] + H2O + H(+). It carries out the reaction 17beta-estradiol + reduced [NADPH--hemoprotein reductase] + O2 = 2-hydroxy-17beta-estradiol + oxidized [NADPH--hemoprotein reductase] + H2O + H(+). The enzyme catalyses 17beta-estradiol + reduced [NADPH--hemoprotein reductase] + O2 = 4-hydroxy-17beta-estradiol + oxidized [NADPH--hemoprotein reductase] + H2O + H(+). It catalyses the reaction estrone + reduced [NADPH--hemoprotein reductase] + O2 = 2-hydroxyestrone + oxidized [NADPH--hemoprotein reductase] + H2O + H(+). The catalysed reaction is estrone + reduced [NADPH--hemoprotein reductase] + O2 = 4-hydroxyestrone + oxidized [NADPH--hemoprotein reductase] + H2O + H(+). It carries out the reaction cholesterol + reduced [NADPH--hemoprotein reductase] + O2 = 25-hydroxycholesterol + oxidized [NADPH--hemoprotein reductase] + H2O + H(+). The enzyme catalyses all-trans-retinol + reduced [NADPH--hemoprotein reductase] + O2 = all-trans-retinal + oxidized [NADPH--hemoprotein reductase] + 2 H2O + H(+). It catalyses the reaction all-trans-retinal + reduced [NADPH--hemoprotein reductase] + O2 = all-trans-retinoate + oxidized [NADPH--hemoprotein reductase] + H2O + 2 H(+). The catalysed reaction is (5Z,8Z,11Z,14Z)-eicosatetraenoate + reduced [NADPH--hemoprotein reductase] + O2 = (14R,15S)-epoxy-(5Z,8Z,11Z)-eicosatrienoate + oxidized [NADPH--hemoprotein reductase] + H2O + H(+). It carries out the reaction (5Z,8Z,11Z,14Z)-eicosatetraenoate + reduced [NADPH--hemoprotein reductase] + O2 = (14S,15R)-epoxy-(5Z,8Z,11Z)-eicosatrienoate + oxidized [NADPH--hemoprotein reductase] + H2O + H(+). The enzyme catalyses (5Z,8Z,11Z,14Z,17Z)-eicosapentaenoate + reduced [NADPH--hemoprotein reductase] + O2 = (17R,18S)-epoxy-(5Z,8Z,11Z,14Z)-eicosatetraenoate + oxidized [NADPH--hemoprotein reductase] + H2O + H(+). It catalyses the reaction (4Z,7Z,10Z,13Z,16Z,19Z)-docosahexaenoate + reduced [NADPH--hemoprotein reductase] + O2 = (19R,20S)-epoxy-(4Z,7Z,10Z,13Z,16Z)-docosapentaenoate + oxidized [NADPH--hemoprotein reductase] + H2O + H(+). The catalysed reaction is (5S)-hydroperoxy-(6E,8Z,11Z,14Z)-eicosatetraenoate = 5-oxo-(6E,8Z,11Z,14Z)-eicosatetraenoate + H2O. It carries out the reaction (12S)-hydroperoxy-(5Z,8Z,10E,14Z)-eicosatetraenoate = 12-oxo-(5Z,8Z,10E,14Z)-eicosatetraenoate + H2O. The enzyme catalyses (15S)-hydroperoxy-(5Z,8Z,11Z,13E)-eicosatetraenoate = 15-oxo-(5Z,8Z,11Z,13E)-eicosatetraenoate + H2O. It catalyses the reaction (13S)-hydroperoxy-(9Z,11E)-octadecadienoate = 13-oxo-(9Z,11E)-octadecadienoate + H2O. The catalysed reaction is (5Z,8Z,11Z,14Z)-eicosatetraenoate + reduced [NADPH--hemoprotein reductase] + O2 = 13-hydroxy-(5Z,8Z,11Z,14Z)-eicosatetraenoate + oxidized [NADPH--hemoprotein reductase] + H2O + H(+). It carries out the reaction (5Z,8Z,11Z,14Z)-eicosatetraenoate + reduced [NADPH--hemoprotein reductase] + O2 = 19-hydroxy-(5Z,8Z,11Z,14Z)-eicosatetraenoate + oxidized [NADPH--hemoprotein reductase] + H2O + H(+). The enzyme catalyses (9Z,12Z)-octadecadienoate + reduced [NADPH--hemoprotein reductase] + O2 = 11-hydroxy-(9Z,12Z)-octadecadienoate + oxidized [NADPH--hemoprotein reductase] + H2O + H(+). The protein operates within cofactor metabolism; retinol metabolism. It functions in the pathway steroid metabolism; cholesterol metabolism. It participates in lipid metabolism; arachidonate metabolism. Functionally, a cytochrome P450 monooxygenase involved in the metabolism of various endogenous substrates, including fatty acids, steroid hormones and vitamins. Mechanistically, uses molecular oxygen inserting one oxygen atom into a substrate, and reducing the second into a water molecule, with two electrons provided by NADPH via cytochrome P450 reductase (NADPH--hemoprotein reductase). Catalyzes the hydroxylation of carbon-hydrogen bonds. Exhibits high catalytic activity for the formation of hydroxyestrogens from estrone (E1) and 17beta-estradiol (E2), namely 2-hydroxy E1 and E2. Metabolizes cholesterol toward 25-hydroxycholesterol, a physiological regulator of cellular cholesterol homeostasis. May act as a major enzyme for all-trans retinoic acid biosynthesis in the liver. Catalyzes two successive oxidative transformation of all-trans retinol to all-trans retinal and then to the active form all-trans retinoic acid. Primarily catalyzes stereoselective epoxidation of the last double bond of polyunsaturated fatty acids (PUFA), displaying a strong preference for the (R,S) stereoisomer. Catalyzes bisallylic hydroxylation and omega-1 hydroxylation of PUFA. May also participate in eicosanoids metabolism by converting hydroperoxide species into oxo metabolites (lipoxygenase-like reaction, NADPH-independent). Plays a role in the oxidative metabolism of xenobiotics. Catalyzes the N-hydroxylation of heterocyclic amines and the O-deethylation of phenacetin. Metabolizes caffeine via N3-demethylation. This chain is Cytochrome P450 1A2 (CYP1A2), found in Cavia porcellus (Guinea pig).